Reading from the N-terminus, the 1385-residue chain is Kinesin-like protein KIF15 (1385 aa).

The disordered stretch occupies residues 1–24 (MAPGCKSELRNVTNSHSNQPSNED). The span at 10–21 (RNVTNSHSNQPS) shows a compositional bias: polar residues. A Kinesin motor domain is found at 26–363 (AIKVFVRIRP…LNFAQRAKLI (338 aa)). 109–116 (GQTGSGKT) contributes to the ATP binding site. Residues 368–1385 (VVNEDTQGNV…NVFLKERKKE (1018 aa)) are a coiled coil. Residue Lys1007 is modified to N6-acetyllysine. 2 positions are modified to phosphoserine: Ser1139 and Ser1167. Residues 1222-1243 (DMKRQGESSSQSRPDSQQLKNE) form a disordered region. Positions 1228-1241 (ESSSQSRPDSQQLK) are enriched in polar residues.

Belongs to the TRAFAC class myosin-kinesin ATPase superfamily. Kinesin family. KLP2 subfamily. Interacts with MKI67 and TPX2. Expressed in sympathetic neurons.

It is found in the cytoplasm. The protein localises to the cytoskeleton. The protein resides in the spindle. In terms of biological role, plus-end directed kinesin-like motor enzyme involved in mitotic spindle assembly. The polypeptide is Kinesin-like protein KIF15 (Kif15) (Rattus norvegicus (Rat)).